We begin with the raw amino-acid sequence, 245 residues long: Chloride intracellular channel protein 2 (245 aa).

The required for insertion into the membrane stretch occupies residues 1 to 96 (MASLALNTQA…EEFLEKTLAP (96 aa)). A glutathione-binding site is contributed by Glu25. The G-site signature appears at 30 to 33 (CPFC). A disulfide bridge links Cys30 with Cys33. A helical membrane pass occupies residues 32-52 (FCQRLFMILWLKGVKFNVTTI). Residues 76–239 (NKELKTDFIK…PEDKEIENTY (164 aa)) enclose the GST C-terminal domain. A glutathione-binding site is contributed by His227.

The protein belongs to the chloride channel CLIC family. Monomer. Interacts with TRAPPC2 and RYR2.

It is found in the cytoplasm. The protein resides in the membrane. The enzyme catalyses chloride(in) = chloride(out). It carries out the reaction tert-butyl hydroperoxide + 2 glutathione = tert-butanol + glutathione disulfide + H2O. It catalyses the reaction cumene hydroperoxide + 2 glutathione = 2-phenylpropan-2-ol + glutathione disulfide + H2O. In the soluble state, catalyzes glutaredoxin-like thiol disulfide exchange reactions with reduced glutathione as electron donor. Displays weak glutathione peroxidase activity. Can insert into membranes and form chloride ion channels. Membrane insertion seems to be redox-regulated and may occur only under oxidizing conditions. Modulates the activity of RYR2 and inhibits calcium influx. The sequence is that of Chloride intracellular channel protein 2 from Rattus norvegicus (Rat).